Reading from the N-terminus, the 699-residue chain is DNA ligase (699 aa).

The interval 1–20 (MTVQKPIESLSPAQAKREHR) is disordered. Residues 43-47 (DAEYD), 92-93 (SL), and glutamate 126 each bind NAD(+). The active-site N6-AMP-lysine intermediate is lysine 128. NAD(+) is bound by residues arginine 149, glutamate 185, lysine 301, and lysine 325. 4 residues coordinate Zn(2+): cysteine 419, cysteine 422, cysteine 443, and cysteine 449. Residues 621–699 (AKESPVAGKT…EEDWLKLVGE (79 aa)) form the BRCT domain.

It belongs to the NAD-dependent DNA ligase family. LigA subfamily. Mg(2+) is required as a cofactor. The cofactor is Mn(2+).

The enzyme catalyses NAD(+) + (deoxyribonucleotide)n-3'-hydroxyl + 5'-phospho-(deoxyribonucleotide)m = (deoxyribonucleotide)n+m + AMP + beta-nicotinamide D-nucleotide.. Functionally, DNA ligase that catalyzes the formation of phosphodiester linkages between 5'-phosphoryl and 3'-hydroxyl groups in double-stranded DNA using NAD as a coenzyme and as the energy source for the reaction. It is essential for DNA replication and repair of damaged DNA. The protein is DNA ligase of Beijerinckia indica subsp. indica (strain ATCC 9039 / DSM 1715 / NCIMB 8712).